The following is a 245-amino-acid chain: Terpene cyclase ausL (245 aa).

7 helical membrane-spanning segments follow: residues 17–37 (ILAI…VNYI), 51–71 (IGIL…WMFP), 76–96 (HWQG…LVTL), 113–133 (IVFI…ALAA), 138–158 (ALGF…GGIA), 170–190 (SYLI…KLCI), and 206–226 (MCWF…FLYF).

This sequence belongs to the paxB family.

The protein localises to the membrane. It functions in the pathway secondary metabolite biosynthesis; terpenoid biosynthesis. Functionally, terpene cyclase; part of the gene cluster A that mediates the biosynthesis of the fungal meroterpenoid acetoxydehydroaustin. The first step of the pathway is the synthesis of 3,5-dimethylorsellinic acid by the polyketide synthase ausA. 3,5-dimethylorsellinic acid is then prenylated by the polyprenyl transferase ausN. Further epoxidation by the FAD-dependent monooxygenase ausM and cyclization by the probable terpene cyclase ausL lead to the formation of protoaustinoid A. Protoaustinoid A is then oxidized to spiro-lactone preaustinoid A3 by the combined action of the FAD-binding monooxygenases ausB and ausC, and the dioxygenase ausE. Acid-catalyzed keto-rearrangement and ring contraction of the tetraketide portion of preaustinoid A3 by ausJ lead to the formation of preaustinoid A4. The aldo-keto reductase ausK, with the help of ausH, is involved in the next step by transforming preaustinoid A4 into isoaustinone which is in turn hydroxylated by the P450 monooxygenase ausI to form austinolide. The cytochrome P450 monooxygenase ausG then modifies austinolide to austinol. Austinol is further acetylated to austin by the O-acetyltransferase ausP, which spontaneously changes to dehydroaustin. The cytochrome P450 monooxygenase then converts dehydroaustin is into 7-dehydrodehydroaustin. The hydroxylation catalyzed by ausR permits the second O-acetyltransferase ausQ to add an additional acetyl group to the molecule, leading to the formation of acetoxydehydroaustin. Due to genetic rearrangements of the clusters and the subsequent loss of some enzymes, the end product of the Penicillium brasilianum austinoid biosynthesis clusters is acetoxydehydroaustin. In Penicillium brasilianum, this protein is Terpene cyclase ausL.